We begin with the raw amino-acid sequence, 883 residues long: DNA mismatch repair protein MutS (883 aa).

A disordered region spans residues 1–25 (MSDSVAPDVPVIREGKNPAQHRDRT). A compositionally biased stretch (basic and acidic residues) spans 11–25 (VIREGKNPAQHRDRT). 664 to 671 (GPNASGKS) is a binding site for ATP. A disordered region spans residues 857 to 883 (RKGNTQPRARKSSAETEAKTQQFELPF).

The protein belongs to the DNA mismatch repair MutS family.

In terms of biological role, this protein is involved in the repair of mismatches in DNA. It is possible that it carries out the mismatch recognition step. This protein has a weak ATPase activity. In Acaryochloris marina (strain MBIC 11017), this protein is DNA mismatch repair protein MutS.